A 174-amino-acid polypeptide reads, in one-letter code: MKKSIFSKKLLFSFGSLVALAAIPLITISCGQTNTDQSQQPGSGSGSGSGTSNGSGSTPTPEQGNNQGGSTPTPEQGNNQGGSTPTPEQGNNQGGSTPTPEQGNNQGGSTPTPEQGNNQGGSTPTPEQGNNQGGSTPTPEQGNNQGGSTPTPEQGNNQGGSTPTPEQGNSQVSK.

The first 29 residues, 1–29 (MKKSIFSKKLLFSFGSLVALAAIPLITIS), serve as a signal peptide directing secretion. A lipid anchor (N-palmitoyl cysteine) is attached at Cys-30. Cys-30 carries the S-diacylglycerol cysteine lipid modification. The tract at residues 32-174 (QTNTDQSQQP…PEQGNSQVSK (143 aa)) is disordered. Positions 43–53 (SGSGSGSGTSN) are enriched in gly residues. 9 repeat units span residues 55-67 (SGST…GNNQ), 68-80 (GGST…GNNQ), 81-93 (GGST…GNNQ), 94-106 (GGST…GNNQ), 107-119 (GGST…GNNQ), 120-132 (GGST…GNNQ), 133-145 (GGST…GNNQ), 146-158 (GGST…GNNQ), and 159-171 (GGST…GNSQ). The interval 55-171 (SGSTPTPEQG…TPTPEQGNSQ (117 aa)) is 9 X 13 AA tandem repeats. Residues 62–174 (EQGNNQGGST…PEQGNSQVSK (113 aa)) show a composition bias toward polar residues.

The protein resides in the cell membrane. In terms of biological role, responsible for the antigenic diversity for host adaptation. Expression in E.coli of a construct containing vlpD, vlpE, and vlpF yields antigenically distinguishable products corresponding to each gene. This chain is Variant surface antigen F (vlpF), found in Mesomycoplasma hyorhinis (Mycoplasma hyorhinis).